A 1489-amino-acid chain; its full sequence is WD repeat-containing protein 7 (1489 aa).

WD repeat units lie at residues 17 to 56 (APTH…EVNP), 62 to 104 (GHTA…CIEF), 156 to 199 (ISPD…SGMQ), 324 to 366 (VICP…EKQE), 404 to 443 (NEPL…IVQL), 462 to 507 (GHRN…MKHI), and 558 to 597 (RHLF…LDRC). Disordered stretches follow at residues 754-783 (IKEH…YRAS) and 911-947 (GDHM…QGQI). The segment covering 767–782 (EARRQSREDSDPEYRA) has biased composition (basic and acidic residues). Ser935 is modified (phosphoserine). 2 WD repeats span residues 1350–1389 (PAIC…CQTI) and 1391–1431 (GHKG…LGSI). Position 1455 is a phosphoserine (Ser1455).

This Mus musculus (Mouse) protein is WD repeat-containing protein 7 (Wdr7).